The following is a 517-amino-acid chain: Ovoinhibitor (517 aa).

7 consecutive Kazal-like domains span residues 67 to 132 (FGIE…ECRP), 133 to 197 (KHVT…ECKL), 198 to 263 (EIGS…KCRQ), 264 to 329 (EIPE…RCKE), 330 to 394 (RSTP…RCRE), 395 to 460 (EVPE…RCEE), and 461 to 517 (DITK…MAAC). The N-linked (GlcNAc...) asparagine glycan is linked to Asn72. 21 disulfides stabilise this stretch: Cys73–Cys112, Cys90–Cys109, Cys98–Cys130, Cys139–Cys177, Cys155–Cys174, Cys163–Cys195, Cys204–Cys243, Cys221–Cys240, Cys229–Cys261, Cys270–Cys309, Cys287–Cys306, Cys295–Cys327, Cys336–Cys374, Cys352–Cys371, Cys360–Cys392, Cys401–Cys440, Cys418–Cys437, Cys426–Cys458, Cys467–Cys499, Cys477–Cys496, and Cys485–Cys517. An N-linked (GlcNAc...) asparagine glycan is attached at Asn186. An N-linked (GlcNAc...) asparagine glycan is attached at Asn506.

Post-translationally, glycosylated. In terms of tissue distribution, expressed in oviduct (at protein level). Expressed in egg white (at protein level). Expressed in egg yolk plasma of non-fertilized eggs (at protein level). Expressed in the magnum of the oviduct (at protein level). Expressed in oviduct. Expressed in liver. Expressed in the cortico-medullary border region of the bursa of Fabricius by the bursal secretory dendritic-like cells. Highly expressed in the magnum of the oviduct, and at a lower level in uterus. Weakly expressed in white isthmus and very weakly in infundibulum. Not expressed in duodenum and kidney.

It localises to the secreted. Functionally, serine protease inhibitor involved in antimicrobial egg defense preventing contamination of table eggs (non-fertilized eggs) and protecting the chick embryo (fertilized eggs). Inhibits trypsin, chymotrypsin, elastase, subtilisin and a proteinase of fungus Aspergillus oryzae. Inhibits calcium-activated potassium channels KCNMA1 (bovine) and slo (Drosophila). Has antibacterial activity against B.thuringiensis LMSA 3.06.004, but not against S.aureus CIP 103 811, P.aeruginosa PAO1, B.cereus ATCC6464 or B.subtilis ATCC 6633. The polypeptide is Ovoinhibitor (Gallus gallus (Chicken)).